The following is a 712-amino-acid chain: Ribosome-releasing factor 2, mitochondrial (712 aa).

The transit peptide at 1 to 29 directs the protein to the mitochondrion; it reads MLRCAWQNGPRQSNRWLRHLSNQIWKRSY. The region spanning 31-310 is the tr-type G domain; the sequence is SKIRNIGILA…AVNSYLPAPE (280 aa). GTP is bound by residues 40–47, 104–108, and 158–161; these read AHIDAGKT, DTPGH, and NKMD.

Belongs to the TRAFAC class translation factor GTPase superfamily. Classic translation factor GTPase family. EF-G/EF-2 subfamily.

It localises to the mitochondrion. Its function is as follows. Mitochondrial GTPase that mediates the disassembly of ribosomes from messenger RNA at the termination of mitochondrial protein biosynthesis. Not involved in the GTP-dependent ribosomal translocation step during translation elongation. The chain is Ribosome-releasing factor 2, mitochondrial from Drosophila yakuba (Fruit fly).